A 299-amino-acid polypeptide reads, in one-letter code: Transcription factor BHLH148 (299 aa).

The interval 90-127 is disordered; the sequence is RMGGGGGGGEKGEGEEMEEEEEVPQRRRRGQGADVESS. Positions 102 to 111 are enriched in acidic residues; that stretch reads EGEEMEEEEE. The interval 127–140 is basic motif; degenerate; it reads SRGFRHMMRERQRR. One can recognise a bHLH domain in the interval 127-176; it reads SRGFRHMMRERQRREKLSQSYADLYAMVSSRSKGDKNSIVQSAAIYIHEL. The helix-loop-helix motif stretch occupies residues 141–176; the sequence is EKLSQSYADLYAMVSSRSKGDKNSIVQSAAIYIHEL. The interval 273–299 is disordered; that stretch reads ERNQPDSDAPFPGSKGWTQTSHVQNVF. Polar residues predominate over residues 288–299; it reads GWTQTSHVQNVF.

This sequence belongs to the bHLH protein family. Interacts with TIFY10A/JAZ6, TIFY10B/JAZ7, TIFY11A/JAZ9, TIFY11C/JAZ11, and TIFY11D/JAZ12.

Its subcellular location is the nucleus. Its function is as follows. May act on an initial response of jasmonate-regulated gene expression toward drought tolerance as part of a BHLH148-TIFY11D/JAZ12-COI1A complex. This is Transcription factor BHLH148 from Oryza sativa subsp. japonica (Rice).